The sequence spans 69 residues: Pleurain-A3 (69 aa).

Residues 1–22 (MFTLKKTLLLLFFLGTISISLC) form the signal peptide. The propeptide occupies 23 to 43 (KQARDADEDDGRKMTEEEVKR). The cysteines at positions 63 and 69 are disulfide-linked.

The protein belongs to the frog skin active peptide (FSAP) family. Pleurain subfamily. Expressed by the skin glands.

The protein localises to the secreted. Functionally, antimicrobial peptide. Has activity against Gram-positive and -negative bacteria, and fungi. Has little hemolytic activity on red blood cells. This Nidirana pleuraden (Yunnan pond frog) protein is Pleurain-A3.